Reading from the N-terminus, the 372-residue chain is Glutamate 5-kinase (372 aa).

Residue Lys-14 participates in ATP binding. Substrate is bound by residues Ser-54, Asp-141, and Asn-153. 173-174 (TD) lines the ATP pocket. Positions 280-358 (RGHVVIDAGA…GEIETVLGYM (79 aa)) constitute a PUA domain.

It belongs to the glutamate 5-kinase family.

The protein localises to the cytoplasm. It catalyses the reaction L-glutamate + ATP = L-glutamyl 5-phosphate + ADP. The protein operates within amino-acid biosynthesis; L-proline biosynthesis; L-glutamate 5-semialdehyde from L-glutamate: step 1/2. Catalyzes the transfer of a phosphate group to glutamate to form L-glutamate 5-phosphate. The polypeptide is Glutamate 5-kinase (Burkholderia orbicola (strain AU 1054)).